The sequence spans 146 residues: UPF0735 ACT domain-containing protein Cphy_3604 (146 aa).

The 76-residue stretch at 70 to 145 folds into the ACT domain; it reads TFMLQMDDIP…GIHYLKILGR (76 aa).

It belongs to the UPF0735 family.

The protein is UPF0735 ACT domain-containing protein Cphy_3604 of Lachnoclostridium phytofermentans (strain ATCC 700394 / DSM 18823 / ISDg) (Clostridium phytofermentans).